We begin with the raw amino-acid sequence, 579 residues long: UPF0324 membrane protein DVU_2133 (579 aa).

11 helical membrane passes run 26–45, 193–215, 225–243, 250–272, 305–327, 369–391, 401–423, 436–456, 476–495, 515–534, and 549–571; these read YWAI…LFLA, PFNI…AVGM, FLVG…LMMG, YWGI…TVGT, IGIP…TFIF, LTLA…PAFI, GGAW…AFLG, IQNV…CARV, FVLG…GSLG, LRNW…TNFR, and YVAG…FYIV.

The protein belongs to the UPF0324 family.

It is found in the cell membrane. The chain is UPF0324 membrane protein DVU_2133 from Nitratidesulfovibrio vulgaris (strain ATCC 29579 / DSM 644 / CCUG 34227 / NCIMB 8303 / VKM B-1760 / Hildenborough) (Desulfovibrio vulgaris).